Reading from the N-terminus, the 170-residue chain is 3-isopropylmalate dehydratase small subunit 1 (170 aa).

It belongs to the LeuD family. LeuD type 2 subfamily. In terms of assembly, heterodimer of LeuC and LeuD.

The enzyme catalyses (2R,3S)-3-isopropylmalate = (2S)-2-isopropylmalate. The protein operates within amino-acid biosynthesis; L-leucine biosynthesis; L-leucine from 3-methyl-2-oxobutanoate: step 2/4. Functionally, catalyzes the isomerization between 2-isopropylmalate and 3-isopropylmalate, via the formation of 2-isopropylmaleate. The protein is 3-isopropylmalate dehydratase small subunit 1 (leuD1) of Methanopyrus kandleri (strain AV19 / DSM 6324 / JCM 9639 / NBRC 100938).